Consider the following 170-residue polypeptide: Tubulin polymerization-promoting protein family member 2 (170 aa).

The interval 127 to 147 (TGTHKERFDESGKGKGIAGRE) is disordered. A compositionally biased stretch (basic and acidic residues) spans 129-139 (THKERFDESGK).

Belongs to the TPPP family.

It is found in the cytoplasm. The protein localises to the cytosol. The protein resides in the cell projection. Its subcellular location is the cilium. It localises to the flagellum. In terms of biological role, probable regulator of microtubule dynamics required for sperm motility. In contrast to other members of the family, has no microtubule bundling activity. In Macaca fascicularis (Crab-eating macaque), this protein is Tubulin polymerization-promoting protein family member 2 (TPPP2).